A 166-amino-acid polypeptide reads, in one-letter code: Ribosome-binding factor A (166 aa).

The segment at 122 to 166 (HVADETDVEDSTDHEDDVTNSEDETKHVDIDTDSEEGTNTDGKAQ) is disordered. Over residues 126–143 (ETDVEDSTDHEDDVTNSE) the composition is skewed to acidic residues.

The protein belongs to the RbfA family. In terms of assembly, monomer. Binds 30S ribosomal subunits, but not 50S ribosomal subunits or 70S ribosomes.

Its subcellular location is the cytoplasm. One of several proteins that assist in the late maturation steps of the functional core of the 30S ribosomal subunit. Associates with free 30S ribosomal subunits (but not with 30S subunits that are part of 70S ribosomes or polysomes). Required for efficient processing of 16S rRNA. May interact with the 5'-terminal helix region of 16S rRNA. The polypeptide is Ribosome-binding factor A (Pseudoalteromonas translucida (strain TAC 125)).